The sequence spans 289 residues: uncharacterized protein (289 aa).

Over residues 80 to 96 the composition is skewed to polar residues; the sequence is PLNESRTSFKNIPQSRN. Disordered regions lie at residues 80-101 and 136-157; these read PLNE…PRDY and PREN…RMRE.

This is an uncharacterized protein from Acanthamoeba polyphaga (Amoeba).